A 46-amino-acid chain; its full sequence is Antimicrobial peptide eNAP-2 (46 aa).

Positions 12–46 (RPGRCPTVPPGTFGHCACLCTGDASEPKGQKCCSN) constitute a WAP domain.

Functionally, has antibiotic activity against several equine uterine pathogens; S.zooepidemicus, E.coli and P.aeruginosa. Highly efficient against S.zoopedemicus. Not active against K.pneumoniae. Selectively inactivates microbial serine proteases (subtilisin A and proteinase K) without inhibiting mammalian serine proteases (human neutrophil elastase, human cathepsin G and bovine pancreatic trypsin). The chain is Antimicrobial peptide eNAP-2 from Equus caballus (Horse).